The chain runs to 941 residues: Lysine-specific demethylase 7A (941 aa).

Residues 37–88 form a PHD-type zinc finger; the sequence is PVYCVCRQPYDVNRFMIECDICKDWFHGSCVGVEEHHAVDIDLYHCPNCAVL. The tract at residues 97 to 114 is linker; the sequence is RRNWHRHDYTEIDDGSKP. In terms of domain architecture, JmjC spans 230–386; the sequence is FSDTKMSELV…MQLRCYEMEK (157 aa). Substrate is bound at residue T279. Fe cation-binding residues include H282 and D284. K299 is a substrate binding site. H354 lines the Fe cation pocket. Disordered regions lie at residues 597-633, 677-700, and 819-921; these read QSLY…EHEE, TTEE…KEES, and QDLS…MATA. The residue at position 604 (S604) is a Phosphoserine. Basic and acidic residues-rich tracts occupy residues 618–633 and 685–700; these read MKIE…EHEE and GDEK…KEES. Over residues 834–876 the composition is skewed to polar residues; that stretch reads SEISQRVQSRNYVDSSGSSLQNGKYMQNSNLTSGACQISNGSL.

The protein belongs to the JHDM1 histone demethylase family. JHDM1D subfamily. Fe(2+) serves as cofactor.

It is found in the nucleus. The enzyme catalyses N(6),N(6)-dimethyl-L-lysyl(9)-[histone H3] + 2 2-oxoglutarate + 2 O2 = L-lysyl(9)-[histone H3] + 2 formaldehyde + 2 succinate + 2 CO2. It catalyses the reaction N(6),N(6)-dimethyl-L-lysyl(27)-[histone H3] + 2 2-oxoglutarate + 2 O2 = L-lysyl(27)-[histone H3] + 2 formaldehyde + 2 succinate + 2 CO2. The catalysed reaction is N(6),N(6)-dimethyl-L-lysyl(36)-[histone H3] + 2-oxoglutarate + O2 = N(6)-methyl-L-lysyl(36)-[histone H3] + formaldehyde + succinate + CO2. It carries out the reaction N(6)-methyl-L-lysyl(20)-[histone H4] + 2-oxoglutarate + O2 = L-lysyl(20)-[histone H4] + formaldehyde + succinate + CO2. Its function is as follows. Histone demethylase required for brain development. Specifically demethylates dimethylated 'Lys-9', 'Lys-27' and 'Lys-36' (H3K9me2, H3K27me2, H3K36me2, respectively) of histone H3 and monomethylated histone H4 'Lys-20' residue (H4K20Me1), thereby playing a central role in histone code. Specifically binds trimethylated 'Lys-4' of histone H3 (H3K4me3), affecting histone demethylase specificity: in presence of H3K4me3, it has no demethylase activity toward H3K9me2, while it has high activity toward H3K27me2. Demethylates H3K9me2 in absence of H3K4me3. Has activity toward H4K20Me1 only when nucleosome is used as a substrate and when not histone octamer is used as substrate. The polypeptide is Lysine-specific demethylase 7A (KDM7A) (Homo sapiens (Human)).